The following is a 521-amino-acid chain: Beta-glucosidase 11 (521 aa).

An N-terminal signal peptide occupies residues 1-23 (MKLLSNSLMFLPLLALALTAVSS). Residues Q45, H144, and 189 to 190 (NE) contribute to the a beta-D-glucoside site. E190 serves as the catalytic Proton donor. C209 and C217 are disulfide-bonded. N-linked (GlcNAc...) asparagine glycans are attached at residues N216 and N221. Y356 provides a ligand contact to a beta-D-glucoside. N364 and N388 each carry an N-linked (GlcNAc...) asparagine glycan. A beta-D-glucoside is bound by residues E422, W466, and F482. The Nucleophile role is filled by E422.

Belongs to the glycosyl hydrolase 1 family.

It catalyses the reaction Hydrolysis of terminal, non-reducing beta-D-glucosyl residues with release of beta-D-glucose.. This Arabidopsis thaliana (Mouse-ear cress) protein is Beta-glucosidase 11.